The chain runs to 143 residues: Transcriptional regulator SlyA (143 aa).

In terms of domain architecture, HTH marR-type spans Glu2–Gln135. The segment at residues Gln49 to Asp72 is a DNA-binding region (H-T-H motif).

The protein belongs to the SlyA family. As to quaternary structure, homodimer.

In terms of biological role, transcription regulator that can specifically activate or repress expression of target genes. The polypeptide is Transcriptional regulator SlyA (Edwardsiella ictaluri (strain 93-146)).